We begin with the raw amino-acid sequence, 119 residues long: Ribosome-binding factor A (119 aa).

The protein belongs to the RbfA family. As to quaternary structure, monomer. Binds 30S ribosomal subunits, but not 50S ribosomal subunits or 70S ribosomes.

The protein localises to the cytoplasm. One of several proteins that assist in the late maturation steps of the functional core of the 30S ribosomal subunit. Associates with free 30S ribosomal subunits (but not with 30S subunits that are part of 70S ribosomes or polysomes). Required for efficient processing of 16S rRNA. May interact with the 5'-terminal helix region of 16S rRNA. The polypeptide is Ribosome-binding factor A (Ligilactobacillus salivarius (strain UCC118) (Lactobacillus salivarius)).